A 259-amino-acid polypeptide reads, in one-letter code: Adenylate kinase (259 aa).

52–57 serves as a coordination point for ATP; that stretch reads GAGKGT. The segment at 72–101 is NMP; sequence ATGDMLRSQVAKKTDLGREAKKIMDQGGLV. AMP-binding positions include Thr-73, Arg-78, 99-101, 128-131, and Gln-135; these read GLV and GFPR. The tract at residues 169 to 206 is LID; that stretch reads GRLVHPASGRSYHKIFNPPKEAMKDDITGEPLVQRSDD. Residues Arg-170 and 179-180 contribute to the ATP site; that span reads SY. Residues Arg-203 and Arg-214 each coordinate AMP. Gln-242 serves as a coordination point for ATP.

It belongs to the adenylate kinase family. AK2 subfamily. In terms of assembly, monomer.

It is found in the cytoplasm. Its subcellular location is the mitochondrion intermembrane space. The catalysed reaction is AMP + ATP = 2 ADP. In terms of biological role, catalyzes the reversible transfer of the terminal phosphate group between ATP and AMP. Plays an important role in cellular energy homeostasis and in adenine nucleotide metabolism. Adenylate kinase activity is critical for regulation of the phosphate utilization and the AMP de novo biosynthesis pathways. This chain is Adenylate kinase (adk1), found in Emericella nidulans (strain FGSC A4 / ATCC 38163 / CBS 112.46 / NRRL 194 / M139) (Aspergillus nidulans).